The sequence spans 288 residues: MFEKLKKKFAEIFHRKKIDPDEVADEIPLKLVEADVSLEAAEDLASLVRNKLKEDTTLDPNEVLSSSILEMMPEYKFDVLNVNKKPFVVLFLGINGTGKTTTIGKFAHYLKRNGKSVVIAAADTFRAGAIEQISLIGREAGTEVIRHDRGSDPSSVAFDAIEHARARNIDYVLIDTAGRMNTNKNLLDEMKKIKRVSKPDLTLLVIDAVSGQDSVNQARMFEENVGYDGVIVTKLDTDARGGSILSIYHDLKKPVLFVCTGQGLDDIMPFDRNWYVRKLIPEPENETA.

Residues 93-100, 175-179, and 233-236 contribute to the GTP site; these read GINGTGKT, DTAGR, and TKLD.

It belongs to the GTP-binding SRP family. FtsY subfamily. In terms of assembly, part of the signal recognition particle protein translocation system, which is composed of SRP and FtsY.

Its subcellular location is the cell membrane. It localises to the cytoplasm. The enzyme catalyses GTP + H2O = GDP + phosphate + H(+). Involved in targeting and insertion of nascent membrane proteins into the cytoplasmic membrane. Acts as a receptor for the complex formed by the signal recognition particle (SRP) and the ribosome-nascent chain (RNC). This Thermoplasma acidophilum (strain ATCC 25905 / DSM 1728 / JCM 9062 / NBRC 15155 / AMRC-C165) protein is Signal recognition particle receptor FtsY.